The primary structure comprises 1937 residues: Myosin-8 (1937 aa).

In terms of domain architecture, Myosin N-terminal SH3-like spans 35-84 (DAKTSVFVAEPKESYVKSTIQSKEGGKVTVKTEGGATLTVREDQVFPMNP). 2 positions are modified to phosphothreonine: Thr66 and Thr71. The 694-residue stretch at 88–781 (DKIEDMAMMT…LLGLLEEMRD (694 aa)) folds into the Myosin motor domain. Lys132 carries the post-translational modification N6,N6,N6-trimethyllysine. 181-188 (GESGAGKT) is an ATP binding site. Tyr389 carries the post-translational modification Phosphotyrosine. Ser392 is modified (phosphoserine). Thr419 bears the Phosphothreonine mark. At Tyr424 the chain carries Phosphotyrosine. Ser625 is subject to Phosphoserine. An actin-binding region spans residues 658–680 (LNKLMTNLRSTHPHFVRCIIPNE). His756 is modified (pros-methylhistidine). Residues 760-774 (KFGHTKVFFKAGLLG) form an actin-binding region. The 33-residue stretch at 781–813 (DEKLAQIITRTQAVCRGFLMRVEYQKMLQRREA) folds into the IQ domain. Residues 842 to 1937 (LLKSAETEKE…REVHTKISAE (1096 aa)) are a coiled coil. Phosphoserine occurs at positions 1091 and 1095. The disordered stretch occupies residues 1126 to 1146 (EAERASRAKAEKQRSDLSREL). Positions 1127-1146 (AERASRAKAEKQRSDLSREL) are enriched in basic and acidic residues. Residues Ser1161, Ser1236, Ser1242, and Ser1260 each carry the phosphoserine modification. 2 positions are modified to phosphothreonine: Thr1264 and Thr1285. 3 positions are modified to phosphoserine: Ser1291, Ser1302, and Ser1305. Position 1463 is a phosphotyrosine (Tyr1463). Position 1466 is a phosphothreonine (Thr1466). Ser1473 is subject to Phosphoserine. A Phosphotyrosine modification is found at Tyr1491. The residue at position 1494 (Ser1494) is a Phosphoserine. Residue Thr1500 is modified to Phosphothreonine. Ser1513 carries the phosphoserine modification. Residue Thr1516 is modified to Phosphothreonine. A phosphoserine mark is found at Ser1553, Ser1573, Ser1602, Ser1713, and Ser1725. Phosphothreonine is present on Thr1729. Position 1738 is a phosphoserine (Ser1738).

The protein belongs to the TRAFAC class myosin-kinesin ATPase superfamily. Myosin family. In terms of assembly, muscle myosin is a hexameric protein that consists of 2 heavy chain subunits (MHC), 2 alkali light chain subunits (MLC) and 2 regulatory light chain subunits (MLC-2).

Its subcellular location is the cytoplasm. The protein localises to the myofibril. Functionally, muscle contraction. In Homo sapiens (Human), this protein is Myosin-8 (MYH8).